A 209-amino-acid polypeptide reads, in one-letter code: Uracil phosphoribosyltransferase (209 aa).

Residues arginine 79, arginine 104, and 131 to 139 contribute to the 5-phospho-alpha-D-ribose 1-diphosphate site; that span reads DPMLATGGS. Residues isoleucine 194 and 199–201 contribute to the uracil site; that span reads GDA. Position 200 (aspartate 200) interacts with 5-phospho-alpha-D-ribose 1-diphosphate.

It belongs to the UPRTase family. Mg(2+) serves as cofactor.

The enzyme catalyses UMP + diphosphate = 5-phospho-alpha-D-ribose 1-diphosphate + uracil. It functions in the pathway pyrimidine metabolism; UMP biosynthesis via salvage pathway; UMP from uracil: step 1/1. Its activity is regulated as follows. Allosterically activated by GTP. Its function is as follows. Catalyzes the conversion of uracil and 5-phospho-alpha-D-ribose 1-diphosphate (PRPP) to UMP and diphosphate. The protein is Uracil phosphoribosyltransferase of Desulfitobacterium hafniense (strain DSM 10664 / DCB-2).